A 268-amino-acid chain; its full sequence is Hemin import ATP-binding protein HmuV (268 aa).

Positions 5–242 constitute an ABC transporter domain; sequence IEARHLSKRA…ETIRDIFEID (238 aa). 37–44 contributes to the ATP binding site; the sequence is GPNGAGKS.

The protein belongs to the ABC transporter superfamily. Heme (hemin) importer (TC 3.A.1.14.5) family. In terms of assembly, the complex is composed of two ATP-binding proteins (HmuV), two transmembrane proteins (HmuU) and a solute-binding protein (HmuT).

The protein resides in the cell inner membrane. In terms of biological role, part of the ABC transporter complex HmuTUV involved in hemin import. Responsible for energy coupling to the transport system. This Bradyrhizobium diazoefficiens (strain JCM 10833 / BCRC 13528 / IAM 13628 / NBRC 14792 / USDA 110) protein is Hemin import ATP-binding protein HmuV.